A 528-amino-acid chain; its full sequence is Tyrosine--tRNA ligase, cytoplasmic (528 aa).

Residue Met-1 is modified to N-acetylmethionine. Gly-2 bears the N-acetylglycine; in Tyrosine--tRNA ligase, cytoplasmic, N-terminally processed mark. Tyr-39 serves as a coordination point for L-tyrosine. Tyr-39 lines the trans-resveratrol pocket. Residues 44 to 52 carry the 'HIGH' region motif; that stretch reads TTGKPHVAY. Residues Tyr-166, Gln-170, Asp-173, and Gln-188 each coordinate L-tyrosine. Trans-resveratrol is bound by residues Gln-170 and Asp-173. Lys-197 is subject to N6-acetyllysine. A Phosphoserine modification is found at Ser-205. Position 206 is an N6-acetyllysine (Lys-206). Residues 222–226 carry the 'KMSKS' region motif; that stretch reads KMSSS. A Nuclear localization signal motif is present at residues 242–247; it reads KKKLKK. Residues 339–363 form a disordered region; the sequence is AAYPDPSKQKPMAKGPAKNSEPEEV. Residues 364 to 468 form the tRNA-binding domain; it reads IPSRLDIRVG…AGSAPGEHVF (105 aa). Ser-386 is modified (phosphoserine). N6-acetyllysine occurs at positions 474, 482, and 490.

This sequence belongs to the class-I aminoacyl-tRNA synthetase family. Homodimer. Interacts (when binding to resveratrol) with PARP1; interaction stimulates the poly-ADP-ribosyltransferase activity of PARP1.

The protein resides in the cytoplasm. The protein localises to the nucleus. The enzyme catalyses tRNA(Tyr) + L-tyrosine + ATP = L-tyrosyl-tRNA(Tyr) + AMP + diphosphate + H(+). Its activity is regulated as follows. Resveratrol strongly inhibits the tyrosine--tRNA ligase activity. Functionally, tyrosine--tRNA ligase that catalyzes the attachment of tyrosine to tRNA(Tyr) in a two-step reaction: tyrosine is first activated by ATP to form Tyr-AMP and then transferred to the acceptor end of tRNA(Tyr). Also acts as a positive regulator of poly-ADP-ribosylation in the nucleus, independently of its tyrosine--tRNA ligase activity. Activity is switched upon resveratrol-binding: resveratrol strongly inhibits the tyrosine--tRNA ligase activity and promotes relocalization to the nucleus, where YARS1 specifically stimulates the poly-ADP-ribosyltransferase activity of PARP1. The sequence is that of Tyrosine--tRNA ligase, cytoplasmic from Homo sapiens (Human).